We begin with the raw amino-acid sequence, 158 residues long: NAD(P)H-quinone oxidoreductase subunit J, chloroplastic (158 aa).

Belongs to the complex I 30 kDa subunit family. As to quaternary structure, NDH is composed of at least 16 different subunits, 5 of which are encoded in the nucleus.

The protein resides in the plastid. Its subcellular location is the chloroplast thylakoid membrane. The enzyme catalyses a plastoquinone + NADH + (n+1) H(+)(in) = a plastoquinol + NAD(+) + n H(+)(out). The catalysed reaction is a plastoquinone + NADPH + (n+1) H(+)(in) = a plastoquinol + NADP(+) + n H(+)(out). Its function is as follows. NDH shuttles electrons from NAD(P)H:plastoquinone, via FMN and iron-sulfur (Fe-S) centers, to quinones in the photosynthetic chain and possibly in a chloroplast respiratory chain. The immediate electron acceptor for the enzyme in this species is believed to be plastoquinone. Couples the redox reaction to proton translocation, and thus conserves the redox energy in a proton gradient. The protein is NAD(P)H-quinone oxidoreductase subunit J, chloroplastic of Solanum bulbocastanum (Wild potato).